Reading from the N-terminus, the 54-residue chain is ATP synthase protein 8 (54 aa).

The chain crosses the membrane as a helical span at residues 8 to 28; the sequence is WWIINFFIIWTAILLTLVILV.

It belongs to the ATPase protein 8 family. In terms of assembly, F-type ATPases have 2 components, CF(1) - the catalytic core - and CF(0) - the membrane proton channel.

The protein localises to the mitochondrion membrane. Functionally, mitochondrial membrane ATP synthase (F(1)F(0) ATP synthase or Complex V) produces ATP from ADP in the presence of a proton gradient across the membrane which is generated by electron transport complexes of the respiratory chain. F-type ATPases consist of two structural domains, F(1) - containing the extramembraneous catalytic core and F(0) - containing the membrane proton channel, linked together by a central stalk and a peripheral stalk. During catalysis, ATP synthesis in the catalytic domain of F(1) is coupled via a rotary mechanism of the central stalk subunits to proton translocation. Part of the complex F(0) domain. Minor subunit located with subunit a in the membrane. This Paracentrotus lividus (Common sea urchin) protein is ATP synthase protein 8 (MT-ATP8).